The primary structure comprises 420 residues: D-tagatose-1,6-bisphosphate aldolase subunit GatZ (420 aa).

It belongs to the GatZ/KbaZ family. GatZ subfamily. As to quaternary structure, forms a complex with GatY.

Its pathway is carbohydrate metabolism; D-tagatose 6-phosphate degradation; D-glyceraldehyde 3-phosphate and glycerone phosphate from D-tagatose 6-phosphate: step 2/2. Functionally, component of the tagatose-1,6-bisphosphate aldolase GatYZ that is required for full activity and stability of the Y subunit. Could have a chaperone-like function for the proper and stable folding of GatY. When expressed alone, GatZ does not show any aldolase activity. Is involved in the catabolism of galactitol. The chain is D-tagatose-1,6-bisphosphate aldolase subunit GatZ from Shigella boydii serotype 18 (strain CDC 3083-94 / BS512).